Consider the following 1241-residue polypeptide: High-affinity potassium transport protein (1241 aa).

The next 2 helical transmembrane spans lie at 49–70 (NFIA…ILLY) and 78–98 (IDAL…TVDV). Residue Asn100 is glycosylated (N-linked (GlcNAc...) asparagine). The helical transmembrane segment at 107–127 (IILYIICCISTPIAVHSCLAF) threads the bilayer. Disordered regions lie at residues 162 to 241 (TART…SLDD), 253 to 316 (KYHG…TPED), and 329 to 570 (EGTA…QLQQ). Polar residues predominate over residues 164-177 (RTMTKSKTGGTQRV). Basic and acidic residues-rich tracts occupy residues 181–191 (GKSDKRDDFQE) and 199–214 (VNRD…HNSR). A compositionally biased stretch (low complexity) spans 215 to 238 (DSNSNANTNSSNNNSINHNGSSGS). Asn223, Asn227, Asn233, Asn257, Asn274, Asn353, and Asn364 each carry an N-linked (GlcNAc...) asparagine glycan. Polar residues-rich tracts occupy residues 268–280 (NTAT…QKLK) and 345–365 (TDGT…TMNE). The segment covering 366-375 (SKIRIQDKGA) has biased composition (basic and acidic residues). Residues 380–411 (DQDSVLHSSNSSACTSDEDSLPTNFGGTTPSL) show a composition bias toward polar residues. Residues Asn389 and Asn442 are each glycosylated (N-linked (GlcNAc...) asparagine). Composition is skewed to basic residues over residues 446-455 (PPRKASKSKR) and 482-497 (HLPK…KRRL). The segment covering 498-509 (STGSIDKNSSSD) has biased composition (polar residues). N-linked (GlcNAc...) asparagine glycosylation is found at Asn505 and Asn538. Positions 520-545 (NDDDDGNEGDNMEEYFADNESGDEDD) are enriched in acidic residues. Residues 561 to 570 (KQQQQHQLQQ) are compositionally biased toward low complexity. N-linked (GlcNAc...) asparagine glycosylation is found at Asn584, Asn660, Asn681, Asn691, and Asn741. Positions 677–714 (NSHRNGSEDVSSDSNETTYPLNGNNDHSQNDANGYPTY) are disordered. A compositionally biased stretch (polar residues) spans 684-708 (EDVSSDSNETTYPLNGNNDHSQNDA). Helical transmembrane passes span 784 to 806 (ILVV…WINL), 819 to 840 (VSPT…GLTL), 844 to 864 (SMMS…FIII), 868 to 888 (GFPI…PDLS), and 904 to 924 (CFTL…LVGL). N-linked (GlcNAc...) asparagine glycosylation is present at Asn925. Helical transmembrane passes span 929 to 949 (WILF…SKGY) and 977 to 997 (SIQV…AISI). A disordered region spans residues 1011-1073 (YGEMGGKPED…ENENPNEEST (63 aa)). Over residues 1021 to 1041 (TDTEEDGDCDDEDDDNEEEES) the composition is skewed to acidic residues. Residues 1050-1062 (GKSKKETKKKKKR) are compositionally biased toward basic residues. The next 2 helical transmembrane spans lie at 1084-1104 (QLSF…ICER) and 1117-1137 (VFTI…SLGY). Asn1141 carries N-linked (GlcNAc...) asparagine glycosylation. Residues 1222-1241 (DELKHKRSLSRSSKRSTKTN) form a disordered region. Residues 1226-1241 (HKRSLSRSSKRSTKTN) show a composition bias toward basic residues.

It belongs to the TrkH potassium transport family.

It is found in the membrane. Its function is as follows. This protein is required for high-affinity potassium transport. In Saccharomyces uvarum (Yeast), this protein is High-affinity potassium transport protein (TRK1).